The sequence spans 310 residues: Solute carrier family 25 member 47 (310 aa).

Solcar repeat units lie at residues 1-80, 93-208, and 217-304; these read MDFV…CLAH, PTKA…LSEW, and PDVL…VLRL. A run of 6 helical transmembrane segments spans residues 3 to 23, 49 to 69, 98 to 116, 192 to 212, 219 to 239, and 275 to 295; these read FVAG…LDTV, LWGF…VSSV, ITLS…TSPT, GHSF…LTPA, VLGV…VATP, and VLFK…MVVF.

This sequence belongs to the mitochondrial carrier (TC 2.A.29) family.

The protein resides in the mitochondrion inner membrane. It is found in the mitochondrion outer membrane. The catalysed reaction is NAD(+)(in) = NAD(+)(out). It catalyses the reaction acetyl-CoA(in) = acetyl-CoA(out). In terms of biological role, mitochondrial NAD(+) transporter that acts as a 'metabolic gate' in hepatic lipogenesis. Provides NAD(+) substrate to mitochondrial SIRT3 deacetylase and enables its NAD(+)-dependent activities in mitochondrial energy metabolism. This triggers downstream activation of PRKAA1/AMPK-alpha signaling cascade that negatively regulates sterol regulatory element-binding protein (SREBP) transcriptional activities and ATP-consuming lipogenesis to restore cellular energy balance. May transport other mitochondrial metabolites having an aromatic nucleotide and phosphate groups, such as acetyl-CoA. Does not transport amino acids. The transport mechanism remains to be elucidated. This Rattus norvegicus (Rat) protein is Solute carrier family 25 member 47.